The following is a 190-amino-acid chain: Potassium-transporting ATPase KdpC subunit (190 aa).

Residues 13–33 (LLLILTLITGILYPIVTTGFA) form a helical membrane-spanning segment.

Belongs to the KdpC family. In terms of assembly, the system is composed of three essential subunits: KdpA, KdpB and KdpC.

Its subcellular location is the cell inner membrane. Its function is as follows. Part of the high-affinity ATP-driven potassium transport (or Kdp) system, which catalyzes the hydrolysis of ATP coupled with the electrogenic transport of potassium into the cytoplasm. This subunit acts as a catalytic chaperone that increases the ATP-binding affinity of the ATP-hydrolyzing subunit KdpB by the formation of a transient KdpB/KdpC/ATP ternary complex. The protein is Potassium-transporting ATPase KdpC subunit of Leptospira interrogans serogroup Icterohaemorrhagiae serovar copenhageni (strain Fiocruz L1-130).